A 396-amino-acid chain; its full sequence is Deoxyguanosinetriphosphate triphosphohydrolase-like protein (396 aa).

Residues 62 to 198 enclose the HD domain; the sequence is RLTHSLEVAQ…AALADDIAYN (137 aa).

Belongs to the dGTPase family. Type 2 subfamily.

This is Deoxyguanosinetriphosphate triphosphohydrolase-like protein from Jannaschia sp. (strain CCS1).